The chain runs to 120 residues: C-C motif chemokine 2 (120 aa).

A signal peptide spans 1-23 (MQRSSVLLCLLVIEATFCSLLMA). Gln-24 bears the Pyrrolidone carboxylic acid mark. 2 cysteine pairs are disulfide-bonded: Cys-33-Cys-57 and Cys-34-Cys-73. Residues 91–120 (RTQQKQNSTAPQTSKPLNIRFTTQDPKNRS) form a disordered region. Residues 93–120 (QQKQNSTAPQTSKPLNIRFTTQDPKNRS) show a composition bias toward polar residues. Residue Asn-97 is glycosylated (N-linked (GlcNAc...) asparagine).

Belongs to the intercrine beta (chemokine CC) family. In terms of assembly, monomer or homodimer; in equilibrium. Is tethered on endothelial cells by glycosaminoglycan (GAG) side chains of proteoglycans. Interacts with TNFAIP6 (via Link domain). Processing at the N-terminus can regulate receptor and target cell selectivity. Deletion of the N-terminal residue converts it from an activator of basophil to an eosinophil chemoattractant. Post-translationally, N-Glycosylated.

The protein localises to the secreted. In terms of biological role, acts as a ligand for C-C chemokine receptor CCR2. Signals through binding and activation of CCR2 and induces a strong chemotactic response and mobilization of intracellular calcium ions. Exhibits a chemotactic activity for monocytes and basophils but not neutrophils or eosinophils. Plays an important role in mediating peripheral nerve injury-induced neuropathic pain. Increases NMDA-mediated synaptic transmission in both dopamine D1 and D2 receptor-containing neurons, which may be caused by MAPK/ERK-dependent phosphorylation of GRIN2B/NMDAR2B. In Cavia porcellus (Guinea pig), this protein is C-C motif chemokine 2 (CCL2).